The primary structure comprises 342 residues: Anthranilate phosphoribosyltransferase (342 aa).

5-phospho-alpha-D-ribose 1-diphosphate-binding positions include Gly-83, 86-87 (GD), Thr-91, 93-96 (NVST), 111-119 (KHGNRSVSG), and Ser-123. Residue Gly-83 participates in anthranilate binding. Residue Ser-95 coordinates Mg(2+). Asn-114 provides a ligand contact to anthranilate. Position 169 (Arg-169) interacts with anthranilate. Residues Asp-228 and Glu-229 each contribute to the Mg(2+) site.

This sequence belongs to the anthranilate phosphoribosyltransferase family. As to quaternary structure, homodimer. Mg(2+) serves as cofactor.

The catalysed reaction is N-(5-phospho-beta-D-ribosyl)anthranilate + diphosphate = 5-phospho-alpha-D-ribose 1-diphosphate + anthranilate. It participates in amino-acid biosynthesis; L-tryptophan biosynthesis; L-tryptophan from chorismate: step 2/5. Functionally, catalyzes the transfer of the phosphoribosyl group of 5-phosphorylribose-1-pyrophosphate (PRPP) to anthranilate to yield N-(5'-phosphoribosyl)-anthranilate (PRA). The sequence is that of Anthranilate phosphoribosyltransferase from Halorhodospira halophila (strain DSM 244 / SL1) (Ectothiorhodospira halophila (strain DSM 244 / SL1)).